The chain runs to 29 residues: Galanin (29 aa).

A29 bears the Alanine amide mark.

The protein belongs to the galanin family.

It localises to the secreted. Functionally, contracts smooth muscle of the gastrointestinal and genitourinary tract, regulates growth hormone release, modulates insulin release, and may be involved in the control of adrenal secretion. The chain is Galanin (gal) from Oncorhynchus mykiss (Rainbow trout).